Here is a 611-residue protein sequence, read N- to C-terminus: Aspartate--tRNA ligase, mitochondrial (611 aa).

The N-terminal 30 residues, 1–30 (MVLSRLPACLLPLVGTKVSIQGWLVATSRQ), are a transit peptide targeting the mitochondrion. An L-aspartate-binding site is contributed by Glu192. Residues 216-219 (QQYK) form an aspartate region. Arg238 serves as a coordination point for L-aspartate. Residues 238 to 240 (RDE) and Glu502 each bind ATP. An L-aspartate-binding site is contributed by Arg509. ATP is bound at residue 554 to 557 (GFDR).

Belongs to the class-II aminoacyl-tRNA synthetase family. Type 1 subfamily.

It is found in the mitochondrion. It catalyses the reaction tRNA(Asp) + L-aspartate + ATP = L-aspartyl-tRNA(Asp) + AMP + diphosphate. The chain is Aspartate--tRNA ligase, mitochondrial (msd1) from Schizosaccharomyces pombe (strain 972 / ATCC 24843) (Fission yeast).